The chain runs to 337 residues: GTPase Obg (337 aa).

Residues 1–159 form the Obg domain; that stretch reads MKFVDSATIS…FELEMELKLM (159 aa). The OBG-type G domain maps to 160 to 322; sequence ADVGLVGFPN…LKDELWRQVS (163 aa). Residues 166–173, 191–195, 213–216, 280–283, and 303–305 each bind GTP; these read GFPNAGKS, FTTLV, DIPG, TKMD, and SSV. 2 residues coordinate Mg(2+): Ser173 and Thr193.

It belongs to the TRAFAC class OBG-HflX-like GTPase superfamily. OBG GTPase family. Monomer. Mg(2+) is required as a cofactor.

The protein localises to the cytoplasm. Functionally, an essential GTPase which binds GTP, GDP and possibly (p)ppGpp with moderate affinity, with high nucleotide exchange rates and a fairly low GTP hydrolysis rate. Plays a role in control of the cell cycle, stress response, ribosome biogenesis and in those bacteria that undergo differentiation, in morphogenesis control. This is GTPase Obg from Chlorobium phaeobacteroides (strain DSM 266 / SMG 266 / 2430).